The chain runs to 396 residues: Obg-like ATPase 1 (396 aa).

Residues 23-283 (LKIGIVGLPN…LSAEERQKYL (261 aa)) enclose the OBG-type G domain. Residue 32–37 (NVGKST) participates in ATP binding. Mg(2+) is bound by residues Ser-36 and Thr-56. Leu-231 contributes to the ATP binding site. A Nuclear export signal motif is present at residues 267-274 (LELKLQEL). Lys-294 is subject to N6-acetyllysine. A TGS domain is found at 304–387 (QLEYFFTAGP…EDGDIIFFKF (84 aa)).

It belongs to the TRAFAC class OBG-HflX-like GTPase superfamily. OBG GTPase family. YchF/OLA1 subfamily. Monomer. The cofactor is Mg(2+). In terms of tissue distribution, expressed in all tissues tested but its expression is more abundant in testis, liver, lung, and brain. Overexpressed in several malignancies, including cancers of the colon, rectum, ovary, lung, stomach, and uterus.

It localises to the cytoplasm. The protein resides in the nucleus. It is found in the nucleolus. Functionally, hydrolyzes ATP, and can also hydrolyze GTP with lower efficiency. Has lower affinity for GTP. The protein is Obg-like ATPase 1 of Homo sapiens (Human).